The following is a 453-amino-acid chain: UDP-glycosyltransferase 76E9 (453 aa).

UDP-alpha-D-glucose-binding positions include Ser-279, 337-339 (APQ), 354-362 (HCGWNSTLE), and 376-379 (TTDQ).

It belongs to the UDP-glycosyltransferase family.

In Arabidopsis thaliana (Mouse-ear cress), this protein is UDP-glycosyltransferase 76E9 (UGT76E9).